We begin with the raw amino-acid sequence, 285 residues long: Transcription factor JAMYB (285 aa).

HTH myb-type domains follow at residues 26–78 and 79–133; these read SAEL…LNYL and RPDV…QKHA. 2 consecutive DNA-binding regions (H-T-H motif) follow at residues 54–78 and 106–129; these read WNAL…LNYL and WSKI…RTRV.

The protein resides in the nucleus. In terms of biological role, probable transcription factor that may be involved in the jasmonate-dependent defense responses to the rice blast fungus Magnaporthe oryzae. Does not seem to function in the salicylic acid-dependent signaling pathway. The protein is Transcription factor JAMYB of Oryza sativa subsp. japonica (Rice).